Here is a 244-residue protein sequence, read N- to C-terminus: Venom nerve growth factor 2 (244 aa).

The signal sequence occupies residues 1-18 (MSMLCYTLIIAFLIGTWA). Positions 19–125 (APKSEDNVPL…TLNRNIRAKR (107 aa)) are excised as a propeptide. A compositionally biased stretch (basic and acidic residues) spans 47 to 66 (GLKTSRNTDQRHPAPKKAED). The interval 47 to 67 (GLKTSRNTDQRHPAPKKAEDQ) is disordered. Cystine bridges form between C139/C205, C181/C233, and C193/C235.

The protein belongs to the NGF-beta family. Homodimer; non-covalently linked. As to expression, expressed by the venom gland.

Its subcellular location is the secreted. In terms of biological role, nerve growth factor is important for the development and maintenance of the sympathetic and sensory nervous systems. It stimulates division and differentiation of sympathetic and embryonic sensory neurons as well as basal forebrain cholinergic neurons in the brain. Its relevance in the snake venom is not clear. However, it has been shown to inhibit metalloproteinase-dependent proteolysis of platelet glycoprotein Ib alpha, suggesting a metalloproteinase inhibition to prevent metalloprotease autodigestion and/or protection against prey proteases. Binds a lipid between the two protein chains in the homodimer. The lipid-bound form promotes histamine relase from mouse mast cells, contrary to the lipid-free form. The chain is Venom nerve growth factor 2 from Tropidechis carinatus (Australian rough-scaled snake).